A 430-amino-acid polypeptide reads, in one-letter code: Adenylosuccinate synthetase (430 aa).

GTP contacts are provided by residues 13-19 (GDEGKGK) and 41-43 (GHT). Catalysis depends on Asp-14, which acts as the Proton acceptor. Mg(2+) is bound by residues Asp-14 and Gly-41. IMP is bound by residues 14 to 17 (DEGK), 39 to 42 (NAGH), Thr-130, Arg-144, Gln-225, Thr-240, and Arg-304. His-42 (proton donor) is an active-site residue. Substrate is bound at residue 300–306 (ASTGRPR). Residues Arg-306, 332-334 (KLD), and 414-416 (STG) contribute to the GTP site.

This sequence belongs to the adenylosuccinate synthetase family. As to quaternary structure, homodimer. Mg(2+) is required as a cofactor.

The protein resides in the cytoplasm. The catalysed reaction is IMP + L-aspartate + GTP = N(6)-(1,2-dicarboxyethyl)-AMP + GDP + phosphate + 2 H(+). It functions in the pathway purine metabolism; AMP biosynthesis via de novo pathway; AMP from IMP: step 1/2. Plays an important role in the de novo pathway of purine nucleotide biosynthesis. Catalyzes the first committed step in the biosynthesis of AMP from IMP. This is Adenylosuccinate synthetase from Xanthomonas axonopodis pv. citri (strain 306).